Reading from the N-terminus, the 557-residue chain is Arginine--tRNA ligase (557 aa).

The short motif at 132 to 142 is the 'HIGH' region element; that stretch reads ANPTGDLHLGH.

The protein belongs to the class-I aminoacyl-tRNA synthetase family. As to quaternary structure, monomer.

Its subcellular location is the cytoplasm. It catalyses the reaction tRNA(Arg) + L-arginine + ATP = L-arginyl-tRNA(Arg) + AMP + diphosphate. This is Arginine--tRNA ligase from Geobacillus kaustophilus (strain HTA426).